The following is a 349-amino-acid chain: SUMO-activating enzyme subunit 1 (349 aa).

Methionine 1 is subject to N-acetylmethionine. Residue valine 2 is modified to N-acetylvaline; in SUMO-activating enzyme subunit 1, N-terminally processed. Residue serine 15 is modified to Phosphoserine. Lysine 201 is modified (N6-acetyllysine).

The protein belongs to the ubiquitin-activating E1 family. In terms of assembly, heterodimer of SAE1 and UBA2/SAE2. The heterodimer corresponds to the two domains that are encoded on a single polypeptide chain in ubiquitin-activating enzyme E1. Interacts with UBE2I.

The protein localises to the nucleus. Its pathway is protein modification; protein sumoylation. Functionally, the heterodimer acts as an E1 ligase for SUMO1, SUMO2, SUMO3, and probably SUMO4. It mediates ATP-dependent activation of SUMO proteins followed by formation of a thioester bond between a SUMO protein and a conserved active site cysteine residue on UBA2/SAE2. This is SUMO-activating enzyme subunit 1 (Sae1) from Rattus norvegicus (Rat).